We begin with the raw amino-acid sequence, 110 residues long: Thiosulfate sulfurtransferase GlpE (110 aa).

Residues 17 to 105 (RENGAQVVDI…WRSVYPADTS (89 aa)) form the Rhodanese domain. Cysteine 65 acts as the Cysteine persulfide intermediate in catalysis.

Belongs to the GlpE family.

The protein localises to the cytoplasm. The enzyme catalyses thiosulfate + hydrogen cyanide = thiocyanate + sulfite + 2 H(+). It carries out the reaction thiosulfate + [thioredoxin]-dithiol = [thioredoxin]-disulfide + hydrogen sulfide + sulfite + 2 H(+). Transferase that catalyzes the transfer of sulfur from thiosulfate to thiophilic acceptors such as cyanide or dithiols. May function in a CysM-independent thiosulfate assimilation pathway by catalyzing the conversion of thiosulfate to sulfite, which can then be used for L-cysteine biosynthesis. The protein is Thiosulfate sulfurtransferase GlpE of Pseudomonas aeruginosa (strain ATCC 15692 / DSM 22644 / CIP 104116 / JCM 14847 / LMG 12228 / 1C / PRS 101 / PAO1).